We begin with the raw amino-acid sequence, 587 residues long: UDP-N-acetylmuramoylalanine--D-glutamate ligase (587 aa).

A disordered region spans residues aspartate 124–aspartate 147. Residues proline 132–aspartate 147 are compositionally biased toward low complexity. Glycine 214–threonine 220 serves as a coordination point for ATP.

This sequence belongs to the MurCDEF family.

The protein localises to the cytoplasm. It carries out the reaction UDP-N-acetyl-alpha-D-muramoyl-L-alanine + D-glutamate + ATP = UDP-N-acetyl-alpha-D-muramoyl-L-alanyl-D-glutamate + ADP + phosphate + H(+). Its pathway is cell wall biogenesis; peptidoglycan biosynthesis. Cell wall formation. Catalyzes the addition of glutamate to the nucleotide precursor UDP-N-acetylmuramoyl-L-alanine (UMA). The protein is UDP-N-acetylmuramoylalanine--D-glutamate ligase of Polaromonas sp. (strain JS666 / ATCC BAA-500).